The sequence spans 114 residues: Large ribosomal subunit protein P1 (114 aa).

Residues 55–114 (EEAAAAPAAAPAASGSDDEAAADDGDDDEEADADEAAEAEDAGDDDDEEPSGEGLGDLFG) form a disordered region. Positions 56 to 69 (EAAAAPAAAPAASG) are enriched in low complexity. Over residues 70 to 105 (SDDEAAADDGDDDEEADADEAAEAEDAGDDDDEEPS) the composition is skewed to acidic residues.

It belongs to the eukaryotic ribosomal protein P1/P2 family. In terms of assembly, part of the 50S ribosomal subunit. Homodimer, it forms part of the ribosomal stalk which helps the ribosome interact with GTP-bound translation factors. Forms a heptameric uL10/P0(P1)2(P1)2(P1)2 complex, where uL10/P0 forms an elongated spine to which the P1 dimers bind in a sequential fashion.

Its function is as follows. Forms part of the ribosomal stalk, playing a central role in the interaction of the ribosome with GTP-bound translation factors. In Halobacterium salinarum (strain ATCC 700922 / JCM 11081 / NRC-1) (Halobacterium halobium), this protein is Large ribosomal subunit protein P1.